The sequence spans 143 residues: Ribonuclease H (143 aa).

Residues 1–140 (MKVEIYTDGA…VDALANLGIE (140 aa)) form the RNase H type-1 domain. Mg(2+)-binding residues include aspartate 8, glutamate 46, aspartate 68, and aspartate 132.

Belongs to the RNase H family. Monomer. Mg(2+) is required as a cofactor.

It is found in the cytoplasm. The catalysed reaction is Endonucleolytic cleavage to 5'-phosphomonoester.. Its function is as follows. Endonuclease that specifically degrades the RNA of RNA-DNA hybrids. The polypeptide is Ribonuclease H (Legionella pneumophila (strain Lens)).